Here is a 177-residue protein sequence, read N- to C-terminus: CASP-like protein 2U1 (177 aa).

A helical membrane pass occupies residues 1–21; the sequence is MVLRIVASLLSIAALVLMAKD. The Cytoplasmic segment spans residues 22–48; that stretch reads KQVVYLNLAGEELTLEAKHSYVEAFVY. Residues 49–69 form a helical membrane-spanning segment; sequence LVYSNGLVAIYCFLLVFALVF. Over 70 to 80 the chain is Extracellular; it reads RLIDKAGCGKS. A helical transmembrane segment spans residues 81 to 101; the sequence is AAWIIFLLDQGLAYVLLAAAA. The Cytoplasmic segment spans residues 102-131; sequence ASTEVAYVAKRGNNKVGWSEVCSTFGHFCN. A helical transmembrane segment spans residues 132-152; sequence LVGVSIVITFISVLAMATLSV. Residues 153–177 are Extracellular-facing; sequence MSARRLFKTYGPERKQISSNDAPAI.

This sequence belongs to the Casparian strip membrane proteins (CASP) family. Homodimer and heterodimers.

The protein resides in the cell membrane. The protein is CASP-like protein 2U1 of Osmunda lancea (Fern).